Here is a 262-residue protein sequence, read N- to C-terminus: Type II restriction enzyme HinfI (262 aa).

It catalyses the reaction Endonucleolytic cleavage of DNA to give specific double-stranded fragments with terminal 5'-phosphates.. In terms of biological role, a P subtype restriction enzyme that recognizes the double-stranded sequence 5'-GANTC-3' and cleaves after G-1. This chain is Type II restriction enzyme HinfI (hinfIR), found in Haemophilus influenzae.